Here is a 319-residue protein sequence, read N- to C-terminus: tRNA (guanine(9)-N(1))-methyltransferase Trmt10A (319 aa).

Disordered regions lie at residues 16 to 87 and 275 to 319; these read LSLN…KRQL and AKIT…SLDS. Residues 17–33 show a composition bias toward polar residues; that stretch reads SLNNCPGTTPGTPMSKN. The Nuclear localization signal signature appears at 35 to 42; that stretch reads LKKQRKLA. Composition is skewed to basic and acidic residues over residues 40-58, 78-87, and 276-302; these read KLAE…EREK, SRKELKKRQL, and KITD…ESDK. Positions 44-67 form a coiled coil; the sequence is FAELRKLRREREREKKKQKRREAK. The SAM-dependent MTase TRM10-type domain occupies 83 to 274; that stretch reads KKRQLADGGK…ETIPMRKGAK (192 aa).

The protein belongs to the class IV-like SAM-binding methyltransferase superfamily. TRM10 family.

The protein localises to the nucleus. It is found in the nucleolus. It localises to the chromosome. It catalyses the reaction guanosine(9) in tRNA + S-adenosyl-L-methionine = N(1)-methylguanosine(9) in tRNA + S-adenosyl-L-homocysteine + H(+). Its function is as follows. S-adenosyl-L-methionine-dependent guanine N(1)-methyltransferase that catalyzes the formation of N(1)-methylguanine at position 9 (m1G9) in tRNAs. Modulates Mettl3-mediated N6-methyladenosine (m6A) methylation of mRNA 5'-UTRs and 3'-UTRs independent of its methyltransferase activity; influences mRNA stability and protein levels, in particular of Hsp70 chaperone proteins and other stress response proteins. Also regulates stability of transcripts encoding proteins involved in signaling processes and proteins involved in neurogenesis and axon guidance pathways. This chain is tRNA (guanine(9)-N(1))-methyltransferase Trmt10A, found in Drosophila melanogaster (Fruit fly).